The chain runs to 1007 residues: Beta-galactosidase (1007 aa).

The segment at 29–48 (TIPPHSDHESFQSQEELEEG) is disordered. Glu-465 (proton donor) is an active-site residue. The active-site Nucleophile is the Glu-532.

The protein belongs to the glycosyl hydrolase 2 family. In terms of assembly, monomer.

The catalysed reaction is Hydrolysis of terminal non-reducing beta-D-galactose residues in beta-D-galactosides.. This Lactobacillus delbrueckii subsp. bulgaricus protein is Beta-galactosidase (lacZ).